We begin with the raw amino-acid sequence, 694 residues long: ATP-binding cassette sub-family G member 8 (694 aa).

Topologically, residues 1–437 are cytoplasmic; it reads MAEKTKEETQ…ISNDFRDLPT (437 aa). One can recognise an ABC transporter domain in the interval 91–335; the sequence is AQFKLPWRSR…FTSIGYPCPR (245 aa). An ABC transmembrane type-2 domain is found at 436 to 684; it reads PTLFIHGAEA…FLSLYYLSLK (249 aa). A helical membrane pass occupies residues 438–458; it reads LFIHGAEACLMSLIIGFLYYG. At 459 to 468 the chain is on the extracellular side; it reads HADKPLSFMD. Residues 469 to 489 form a helical membrane-spanning segment; it reads MAALLFMIGALIPFNVILDVV. Residues 490–518 lie on the Cytoplasmic side of the membrane; sequence SKCHSERSLLYYELEDGLYTAGPYFFAKV. The chain crosses the membrane as a helical span at residues 519–539; sequence LGELPEHCAYVIIYGMPIYWL. Residues 540-548 lie on the Extracellular side of the membrane; sequence TNLRPGPEL. A helical transmembrane segment spans residues 549 to 569; it reads FLLHFMLLWLVVFCCRTMALA. At 570 to 576 the chain is on the cytoplasmic side; it reads ASAMLPT. Residues 577–597 traverse the membrane as a helical segment; the sequence is FHMSSFCCNALYNSFYLTAGF. Over 598–660 the chain is Extracellular; sequence MINLNNLWIV…VTAMDLNSHP (63 aa). N-linked (GlcNAc...) asparagine glycosylation occurs at Asn640. The chain crosses the membrane as a helical span at residues 661–681; the sequence is LYAIYLIVIGISCGFLSLYYL. The Cytoplasmic segment spans residues 682-694; the sequence is SLKFIKQKSIQDW.

The protein belongs to the ABC transporter superfamily. ABCG family. Eye pigment precursor importer (TC 3.A.1.204) subfamily. Heterodimer with ABCG8. Mg(2+) is required as a cofactor. N-glycosylated. N-glycosylation is important for efficient export out of the endoplasmic reticulum. As to expression, highest expression in liver, with lower levels in small intestine and colon.

The protein resides in the cell membrane. It is found in the apical cell membrane. It catalyses the reaction cholesterol(in) + ATP + H2O = cholesterol(out) + ADP + phosphate + H(+). It carries out the reaction sitosterol(in) + ATP + H2O = sitosterol(out) + ADP + phosphate + H(+). Its function is as follows. ABCG5 and ABCG8 form an obligate heterodimer that mediates Mg(2+)- and ATP-dependent sterol transport across the cell membrane. Plays an essential role in the selective transport of the dietary cholesterol in and out of the enterocytes and in the selective sterol excretion by the liver into bile. Required for normal sterol homeostasis. The heterodimer with ABCG5 has ATPase activity. This is ATP-binding cassette sub-family G member 8 from Rattus norvegicus (Rat).